A 419-amino-acid chain; its full sequence is UDP-N-acetylglucosamine 1-carboxyvinyltransferase (419 aa).

22-23 (KN) contacts phosphoenolpyruvate. Arg92 is a binding site for UDP-N-acetyl-alpha-D-glucosamine. Catalysis depends on Cys116, which acts as the Proton donor. 2-(S-cysteinyl)pyruvic acid O-phosphothioketal is present on Cys116. Residues Asp307 and Val329 each contribute to the UDP-N-acetyl-alpha-D-glucosamine site.

This sequence belongs to the EPSP synthase family. MurA subfamily.

The protein resides in the cytoplasm. The enzyme catalyses phosphoenolpyruvate + UDP-N-acetyl-alpha-D-glucosamine = UDP-N-acetyl-3-O-(1-carboxyvinyl)-alpha-D-glucosamine + phosphate. Its pathway is cell wall biogenesis; peptidoglycan biosynthesis. Its function is as follows. Cell wall formation. Adds enolpyruvyl to UDP-N-acetylglucosamine. In Pseudothermotoga lettingae (strain ATCC BAA-301 / DSM 14385 / NBRC 107922 / TMO) (Thermotoga lettingae), this protein is UDP-N-acetylglucosamine 1-carboxyvinyltransferase.